The following is a 674-amino-acid chain: Penicillin-binding protein activator LpoA (674 aa).

The signal sequence occupies residues 1–31; the sequence is MLSSTFVRTKAGRSKPVRLTAVIAAALFLAG. The N-palmitoyl cysteine moiety is linked to residue Cys-32. Cys-32 carries S-diacylglycerol cysteine lipidation. The tract at residues 291–349 is disordered; sequence GVTPSTPVQQQQPASVPEQAAQPASTDPNANGAVSTSAPDAAPVTAAQPSAPSTAPITP. Residues 292–315 are compositionally biased toward low complexity; sequence VTPSTPVQQQQPASVPEQAAQPAS. Over residues 316–328 the composition is skewed to polar residues; that stretch reads TDPNANGAVSTSA. Residues 331-349 show a composition bias toward low complexity; that stretch reads AAPVTAAQPSAPSTAPITP.

Belongs to the LpoA family. In terms of assembly, interacts with PBP1a.

It is found in the cell outer membrane. Functionally, regulator of peptidoglycan synthesis that is essential for the function of penicillin-binding protein 1A (PBP1a). This Serratia proteamaculans (strain 568) protein is Penicillin-binding protein activator LpoA.